Here is a 588-residue protein sequence, read N- to C-terminus: MEFSILADSFNKMESTRKRLELTQYLVELFKKTPQEVISKIVYLLQGKLRPDFEGVELGVAEKLAIRAISKSSGIPIKKIEEEYRKGGDLGHAATTILEQKTQTTFLVEDITVERVYETLFKIAKLEGNRSQDMKMKYISSLLNDASPLEASFILKILLGTLRLGIAENTVMDALALAFSGNKENRKILEHAYNVSSDLGKVAEVLATEGLAEVEKFKIILFNPIRPMLADRVKSEQEAIEKMGNEFAAEYKLDGERVQLHIEGDKVVLFSRSLENISSYYPDIIEKIPKTIQAENIVLEAEAVAINENTGEFLPFQELMHRRRKYKIEKAVTQYPITVNLFDILYCNGKSCLELDYKERREKMEKVVKEDDFVKHIPMAIVKNENDIEDFFENSINAGSEGLMLKTLVSPYQAGSRGSHWLKLKREYQNELGDSLDLVVIGGFFGKGRRTGNYGTLLLATYEEDEDTFTSICKVGTGFSDEDLDQLYQILNPKVTIKKNPRINSEMEADVWFEPELVIEVVASEITLSPIHKAARDKIRKGAGLALRFPKFTGKMRVEKMAEDASTNEEVITLYQGQKKVAHDKSLM.

Residue glutamate 250 coordinates ATP. Catalysis depends on lysine 252, which acts as the N6-AMP-lysine intermediate. Residues arginine 257, arginine 272, glutamate 302, phenylalanine 342, arginine 417, and lysine 423 each coordinate ATP.

It belongs to the ATP-dependent DNA ligase family. The cofactor is Mg(2+).

It carries out the reaction ATP + (deoxyribonucleotide)n-3'-hydroxyl + 5'-phospho-(deoxyribonucleotide)m = (deoxyribonucleotide)n+m + AMP + diphosphate.. In terms of biological role, DNA ligase that seals nicks in double-stranded DNA during DNA replication, DNA recombination and DNA repair. The sequence is that of DNA ligase from Nitrosopumilus maritimus (strain SCM1).